A 1663-amino-acid polypeptide reads, in one-letter code: Cortactin-binding protein 2 (1663 aa).

Disordered stretches follow at residues 1–23 (MATD…AGAA), 203–222 (KKKT…RSTE), 352–440 (ARPG…LHPG), 454–478 (GNAN…SPTS), and 498–616 (RFTS…PKPS). Positions 119 to 276 (KKMQERMSAQ…EQLKRGSDSK (158 aa)) form a coiled coil. Residues 384–396 (NGPSTGSTPDPTS) are compositionally biased toward low complexity. Polar residues predominate over residues 411–422 (QTPGIAPQNSQA). Residue R498 is modified to Asymmetric dimethylarginine. Over residues 583–593 (TVASPPSSLPQ) the composition is skewed to polar residues. ANK repeat units follow at residues 709–739 (GRPT…DINY), 743–772 (DGHS…QVNA), 776–805 (NGFT…NINH), 809–838 (GGQT…NRSV), and 842–871 (DGWT…LARG). The segment at 876-897 (EEGSESSVFDLDGGEESPEGIS) is disordered. The stretch at 912–942 (EGWTAAHIAASKGFKNCLEILCRHGGLEPER) is one ANK 6 repeat. Residues 1446–1485 (NKKKGESGAWRKVNTSPRRKSGRFSLPTWNKPDLSTEGMK) form a disordered region. S1524 is modified (phosphoserine). Disordered regions lie at residues 1580–1602 (SQKE…KSKT) and 1615–1663 (VPRS…KPNK). The span at 1582–1599 (KEVSPLSSHQTTECSNSK) shows a compositional bias: polar residues. The span at 1624 to 1638 (SQNTKRSSSSSNTRQ) shows a compositional bias: low complexity. Residues 1645–1663 (SKEENWNLHKNEHLEKPNK) show a composition bias toward basic and acidic residues.

As to quaternary structure, interacts with CTTN/cortactin SH3 domain. Interacts with STRN, STRN4/zinedin and MOB4/phocein; this interactions mediate the association with the STRIPAK core complex and may regulate dendritic spine distribution of the STRIPAK complex in hippocampal neurons. Activation of glutamate receptors weakens the interaction with STRN and STRN4.

The protein localises to the cytoplasm. It localises to the cell cortex. It is found in the cell projection. Its subcellular location is the dendritic spine. Functionally, regulates the dendritic spine distribution of CTTN/cortactin in hippocampal neurons, and thus controls dendritic spinogenesis and dendritic spine maintenance. Associates with the striatin-interacting phosphatase and kinase (STRIPAK) core complex to regulate dendritic spine distribution of the STRIPAK complex in hippocampal neurons. The chain is Cortactin-binding protein 2 (CTTNBP2) from Nomascus leucogenys (Northern white-cheeked gibbon).